Reading from the N-terminus, the 287-residue chain is MPFNGYQTYYRIVGDRQSNKTPLVLLHGGPGSTHNYFEGFDDLAAQTGRPIVMYDQLGCGRSSIPDDDQLWQAAMWVAELRALRTYLDLPEIHLLGQSWGGMLAIIYGCDYRPQGIKSLILASTLSSARLWAQEQHRMIRLMSPVDQSAIATAERLQDFTGAAYLTANQHFMTQHASGPITADDPEFLRRSKRVGTTAYNVAWGPNEYNPTGTLADYEYTDRLQYLQMPTLVTSGTDDLCTPLVAKTMVDQLPHATWTLFPRSRHMAFIDENTAYMTRLRHWLAAHD.

Positions 22-271 constitute an AB hydrolase-1 domain; sequence PLVLLHGGPG…RSRHMAFIDE (250 aa). Serine 98 (nucleophile) is an active-site residue. Aspartate 238 is a catalytic residue. The Proton donor role is filled by histidine 265.

It belongs to the peptidase S33 family.

The protein localises to the cell envelope. It catalyses the reaction Release of N-terminal proline from a peptide.. Releases the N-terminal proline from various substrates. The protein is Proline iminopeptidase of Lactiplantibacillus plantarum (strain ATCC BAA-793 / NCIMB 8826 / WCFS1) (Lactobacillus plantarum).